The sequence spans 487 residues: MNQKLSEQELIRRQKIEKLQKLGVEVFHETVKFDLNINKIIQKYNSFSKDELAKDEFSLSTTGRIITIRSSFLVLKSQGSKFQIYLPIKELDKKYLELIDLLDIGDIIFVNGKLMKTQTGELTLRANELKLLSKSLKVLPDKFHGLNDIEERYRHRYVDLIVNDDVRKTFLLRSRIISLIRKYFDNLEYLEVDTPVLQPILGGASAKPFITKFNALNSNFYLRIATELPLKKLVVGGFDRVYEIGRIFRNEGVDTTHNPEFTSIEYYEAYSNNEGMMNRTEDLFKFIAKELNLKTIFFNGYEIDLNKPFRRLNMVEALNEKLGIDLYKISFEDAKVLAKKHHIKVESYFKIGHIINELFELFIEKDLIQPTFVYGHPIEISPLANKNKKNPNFTDRAELFIGTKEYANMFTELTDPIDQLERFKDQQNEKDNGNEEANEIDYDFVEALEYGLPPTGGCGIGIDRLVMLFTNNESIREVLLFPHLKNK.

Mg(2+) is bound by residues Glu398 and Glu405.

It belongs to the class-II aminoacyl-tRNA synthetase family. As to quaternary structure, homodimer. Requires Mg(2+) as cofactor.

The protein localises to the cytoplasm. The catalysed reaction is tRNA(Lys) + L-lysine + ATP = L-lysyl-tRNA(Lys) + AMP + diphosphate. The protein is Lysine--tRNA ligase of Mycoplasma mobile (strain ATCC 43663 / 163K / NCTC 11711) (Mesomycoplasma mobile).